The chain runs to 251 residues: Triosephosphate isomerase (251 aa).

9–11 (NWK) provides a ligand contact to substrate. H95 (electrophile) is an active-site residue. The Proton acceptor role is filled by E167. Substrate contacts are provided by residues G173, S213, and 234 to 235 (GG).

It belongs to the triosephosphate isomerase family. As to quaternary structure, homodimer.

It is found in the cytoplasm. The catalysed reaction is D-glyceraldehyde 3-phosphate = dihydroxyacetone phosphate. The protein operates within carbohydrate biosynthesis; gluconeogenesis. Its pathway is carbohydrate degradation; glycolysis; D-glyceraldehyde 3-phosphate from glycerone phosphate: step 1/1. Its function is as follows. Involved in the gluconeogenesis. Catalyzes stereospecifically the conversion of dihydroxyacetone phosphate (DHAP) to D-glyceraldehyde-3-phosphate (G3P). The protein is Triosephosphate isomerase of Latilactobacillus sakei subsp. sakei (strain 23K) (Lactobacillus sakei subsp. sakei).